Reading from the N-terminus, the 171-residue chain is Protein GrpE (171 aa).

The segment at 1 to 22 (MNHEQPDIESQQSAADAAATAG) is disordered.

This sequence belongs to the GrpE family. In terms of assembly, homodimer.

It is found in the cytoplasm. Functionally, participates actively in the response to hyperosmotic and heat shock by preventing the aggregation of stress-denatured proteins, in association with DnaK and GrpE. It is the nucleotide exchange factor for DnaK and may function as a thermosensor. Unfolded proteins bind initially to DnaJ; upon interaction with the DnaJ-bound protein, DnaK hydrolyzes its bound ATP, resulting in the formation of a stable complex. GrpE releases ADP from DnaK; ATP binding to DnaK triggers the release of the substrate protein, thus completing the reaction cycle. Several rounds of ATP-dependent interactions between DnaJ, DnaK and GrpE are required for fully efficient folding. In Stenotrophomonas maltophilia (strain K279a), this protein is Protein GrpE.